The sequence spans 113 residues: Small ribosomal subunit protein bS16 (113 aa).

Residues 84–113 are disordered; sequence PKPAYTEQPKKSAPKKRAQERAAAAAAAAA.

Belongs to the bacterial ribosomal protein bS16 family.

The sequence is that of Small ribosomal subunit protein bS16 from Gluconacetobacter diazotrophicus (strain ATCC 49037 / DSM 5601 / CCUG 37298 / CIP 103539 / LMG 7603 / PAl5).